A 139-amino-acid chain; its full sequence is MSIISEFREFIARGNVIDLAVGVIIGAAFNDIVKALVDNIVMPPIGLVLSGIDFSDLAWVLKPDDPATPALDAVAIQYGAFINTCIRFLIVAWAVFMLVKLVNVIRRREAEKPPEEKPAPTPQETLLMEIRDLLKRRAD.

Helical transmembrane passes span 16–36, 40–60, and 79–99; these read VIDL…VKAL, IVMP…LAWV, and GAFI…FMLV.

It belongs to the MscL family. In terms of assembly, homopentamer.

The protein localises to the cell inner membrane. In terms of biological role, channel that opens in response to stretch forces in the membrane lipid bilayer. May participate in the regulation of osmotic pressure changes within the cell. In Phenylobacterium zucineum (strain HLK1), this protein is Large-conductance mechanosensitive channel.